The primary structure comprises 170 residues: Neurotensin/neuromedin N (170 aa).

A signal peptide spans 1–23; that stretch reads MMAGMKIQLVCMILLAFSSWSLC.

Belongs to the neurotensin family. As to quaternary structure, interacts with NTSR1. Interacts with SORT1. Interacts with SORL1. Post-translationally, neurotensin is cleaved and degraded by Angiotensin-converting enzyme (ACE) and neprilysin (MME).

Its subcellular location is the secreted. It is found in the cytoplasmic vesicle. It localises to the secretory vesicle. In terms of biological role, neurotensin may play an endocrine or paracrine role in the regulation of fat metabolism. It causes contraction of smooth muscle. In Canis lupus familiaris (Dog), this protein is Neurotensin/neuromedin N (NTS).